Reading from the N-terminus, the 127-residue chain is Fluoride-specific ion channel FluC (127 aa).

A run of 4 helical transmembrane segments spans residues L6–F26, T37–A57, L67–V87, and L96–L116. Na(+) contacts are provided by G75 and T78.

Belongs to the fluoride channel Fluc/FEX (TC 1.A.43) family.

The protein resides in the cell inner membrane. The enzyme catalyses fluoride(in) = fluoride(out). Na(+) is not transported, but it plays an essential structural role and its presence is essential for fluoride channel function. In terms of biological role, fluoride-specific ion channel. Important for reducing fluoride concentration in the cell, thus reducing its toxicity. In Tolumonas auensis (strain DSM 9187 / NBRC 110442 / TA 4), this protein is Fluoride-specific ion channel FluC.